Reading from the N-terminus, the 185-residue chain is Ribosome-recycling factor (185 aa).

This sequence belongs to the RRF family.

Its subcellular location is the cytoplasm. Functionally, responsible for the release of ribosomes from messenger RNA at the termination of protein biosynthesis. May increase the efficiency of translation by recycling ribosomes from one round of translation to another. This is Ribosome-recycling factor from Corynebacterium kroppenstedtii (strain DSM 44385 / JCM 11950 / CIP 105744 / CCUG 35717).